The following is a 397-amino-acid chain: Nicotinate phosphoribosyltransferase (397 aa).

The residue at position 221 (His-221) is a Phosphohistidine; by autocatalysis.

Belongs to the NAPRTase family. Post-translationally, transiently phosphorylated on a His residue during the reaction cycle. Phosphorylation strongly increases the affinity for substrates and increases the rate of nicotinate D-ribonucleotide production. Dephosphorylation regenerates the low-affinity form of the enzyme, leading to product release.

The enzyme catalyses nicotinate + 5-phospho-alpha-D-ribose 1-diphosphate + ATP + H2O = nicotinate beta-D-ribonucleotide + ADP + phosphate + diphosphate. It participates in cofactor biosynthesis; NAD(+) biosynthesis; nicotinate D-ribonucleotide from nicotinate: step 1/1. Catalyzes the synthesis of beta-nicotinate D-ribonucleotide from nicotinate and 5-phospho-D-ribose 1-phosphate at the expense of ATP. The polypeptide is Nicotinate phosphoribosyltransferase (Herminiimonas arsenicoxydans).